Consider the following 826-residue polypeptide: Zinc phosphodiesterase ELAC protein 2 (826 aa).

The transit peptide at 1–16 directs the protein to the mitochondrion; the sequence is MWALCSLLRSAAGRTM. Polar residues predominate over residues 15 to 24; sequence TMSQGRTISQ. 2 disordered regions span residues 15-51 and 189-231; these read TMSQGRTISQAPARRERPRKDPLRHLRTREKRGPSGC and QRRG…VSQR. Basic and acidic residues predominate over residues 27–38; sequence ARRERPRKDPLR. Residues Ser-199, Ser-208, Ser-212, Ser-229, Ser-618, and Ser-736 each carry the phosphoserine modification. The span at 208–224 shows a compositional bias: basic and acidic residues; that stretch reads SPERSSDSESNENEPHL. Residues 798–826 are disordered; that stretch reads ELAGGLEDGEPQQKRAHTEEPQAKKVRAQ. The segment covering 808–820 has biased composition (basic and acidic residues); it reads PQQKRAHTEEPQA.

The protein belongs to the RNase Z family. In terms of assembly, homodimer. Interacts with PTCD1. It depends on Zn(2+) as a cofactor.

The protein resides in the mitochondrion. It localises to the mitochondrion matrix. It is found in the mitochondrion nucleoid. Its subcellular location is the nucleus. The enzyme catalyses Endonucleolytic cleavage of RNA, removing extra 3' nucleotides from tRNA precursor, generating 3' termini of tRNAs. A 3'-hydroxy group is left at the tRNA terminus and a 5'-phosphoryl group is left at the trailer molecule.. Its function is as follows. Zinc phosphodiesterase, which displays mitochondrial tRNA 3'-processing endonuclease activity. Involved in tRNA maturation, by removing a 3'-trailer from precursor tRNA. Associates with mitochondrial DNA complexes at the nucleoids to initiate RNA processing and ribosome assembly. In Gorilla gorilla gorilla (Western lowland gorilla), this protein is Zinc phosphodiesterase ELAC protein 2 (ELAC2).